Reading from the N-terminus, the 342-residue chain is Leucine-rich repeat-containing protein 23 (342 aa).

Over residues 1-30 the composition is skewed to acidic residues; that stretch reads MSDEDDLEDFETDQDDLEREDDEKETEEWE. Residues 1-42 form a disordered region; the sequence is MSDEDDLEDFETDQDDLEREDDEKETEEWEDYRKEGEESEDW. The stretch at 3–27 forms a coiled coil; sequence DEDDLEDFETDQDDLEREDDEKETE. LRR repeat units follow at residues 91-112, 113-133, 134-154, 155-176, 179-199, 200-221, 222-243, and 245-266; these read HLRYVDVSENHLTDLSPLNHLT, NLLWLKADGNQLRSARLNELP, YLQIASFAYNQITDTEGISHP, RLASLDLKGNRIHMVTGLDPQK, SLHTLELRGNQLNSTLGINLP, KLKNLFLAQNMLKKVEGLENLS, NLTTLHLRDNQIETLSGFSKEM, and SLQYLNLRGNMVADLGELAKLR. The segment at 207-342 is interaction with RSPH9; the sequence is AQNMLKKVEG…PESELDQSST (136 aa). Residues 279-317 form the LRRCT domain; sequence NPCTDENDYRQEALVQIAHLERLDKEFYEEEERAEADEI. Positions 306–332 form a coiled coil; the sequence is YEEEERAEADEIRQRMKEEQEQEAEVE. Residues 307–342 are disordered; sequence EEEERAEADEIRQRMKEEQEQEAEVEPESELDQSST. Positions 314 to 324 are enriched in basic and acidic residues; that stretch reads ADEIRQRMKEE. Positions 325 to 342 are enriched in acidic residues; sequence QEQEAEVEPESELDQSST.

In terms of assembly, component of the axonemal radial spoke complex. Interacts with RSPH3. Interacts with RSPH9.

Its subcellular location is the cytoplasm. It localises to the cytoskeleton. It is found in the flagellum axoneme. Essential for sperm motility and male fertility. Plays an important role in the proper assembly of the third radial spoke (RS3) head and the bridge structure between RS2 and RS3 in the sperm flagella. This is Leucine-rich repeat-containing protein 23 (LRRC23) from Bos taurus (Bovine).